The following is a 504-amino-acid chain: uncharacterized protein (504 aa).

A disordered region spans residues 36–60 (TAFRMEKEQRLPSQNKPPRGRRRPD). The 185-residue stretch at 125 to 309 (QTHEPGRLGL…RPHLQVLPER (185 aa)) folds into the Integrase catalytic domain.

This is an uncharacterized protein from Sinorhizobium fredii (strain NBRC 101917 / NGR234).